Here is a 546-residue protein sequence, read N- to C-terminus: Cholesterol oxidase (546 aa).

The segment at residues 1–42 is a signal peptide (tat-type signal); the sequence is MTAQQHLSRRRMLGMAAFGAAALAGGTTIAAPRAAAAAKSAA. Positions 57, 58, 77, 152, 156, 157, 159, and 287 each coordinate FAD. Residues Glu398 and His484 each act as proton acceptor in the active site. FAD is bound by residues Gly512 and Phe524.

Belongs to the GMC oxidoreductase family. In terms of assembly, monomer. FAD is required as a cofactor. In terms of processing, predicted to be exported by the Tat system. The position of the signal peptide cleavage has been experimentally proven.

Its subcellular location is the secreted. The enzyme catalyses cholesterol + O2 = cholest-5-en-3-one + H2O2. The catalysed reaction is cholest-5-en-3-one = cholest-4-en-3-one. The protein operates within steroid metabolism; cholesterol degradation. Functionally, bifunctional enzyme that catalyzes the oxidation and isomerization of cholesterol to cholestenone (cholest-4-en-3-one), an initial step in the cholesterol degradation process. The cholesterol degradation pathway allows the bacterium to utilize cholesterol as its sole source of carbon and energy. In Streptomyces sp. (strain SA-COO), this protein is Cholesterol oxidase.